Here is a 180-residue protein sequence, read N- to C-terminus: Acireductone dioxygenase (180 aa).

4 residues coordinate Fe(2+): H97, H99, E103, and H141. Residues H97, H99, E103, and H141 each coordinate Ni(2+).

This sequence belongs to the acireductone dioxygenase (ARD) family. Monomer. Fe(2+) is required as a cofactor. Ni(2+) serves as cofactor.

The catalysed reaction is 1,2-dihydroxy-5-(methylsulfanyl)pent-1-en-3-one + O2 = 3-(methylsulfanyl)propanoate + CO + formate + 2 H(+). It carries out the reaction 1,2-dihydroxy-5-(methylsulfanyl)pent-1-en-3-one + O2 = 4-methylsulfanyl-2-oxobutanoate + formate + 2 H(+). It functions in the pathway amino-acid biosynthesis; L-methionine biosynthesis via salvage pathway; L-methionine from S-methyl-5-thio-alpha-D-ribose 1-phosphate: step 5/6. Its function is as follows. Catalyzes 2 different reactions between oxygen and the acireductone 1,2-dihydroxy-3-keto-5-methylthiopentene (DHK-MTPene) depending upon the metal bound in the active site. Fe-containing acireductone dioxygenase (Fe-ARD) produces formate and 2-keto-4-methylthiobutyrate (KMTB), the alpha-ketoacid precursor of methionine in the methionine recycle pathway. Ni-containing acireductone dioxygenase (Ni-ARD) produces methylthiopropionate, carbon monoxide and formate, and does not lie on the methionine recycle pathway. In Serratia proteamaculans (strain 568), this protein is Acireductone dioxygenase.